The sequence spans 332 residues: tRNA-dihydrouridine(20/20a) synthase (332 aa).

FMN contacts are provided by residues 22–24 and Gln-75; that span reads PMM. Cys-105 functions as the Proton donor in the catalytic mechanism. Residues Lys-144, His-177, 217–219, and 239–240 contribute to the FMN site; these read NGG and GR.

The protein belongs to the Dus family. DusA subfamily. Requires FMN as cofactor.

It catalyses the reaction 5,6-dihydrouridine(20) in tRNA + NADP(+) = uridine(20) in tRNA + NADPH + H(+). The catalysed reaction is 5,6-dihydrouridine(20) in tRNA + NAD(+) = uridine(20) in tRNA + NADH + H(+). The enzyme catalyses 5,6-dihydrouridine(20a) in tRNA + NADP(+) = uridine(20a) in tRNA + NADPH + H(+). It carries out the reaction 5,6-dihydrouridine(20a) in tRNA + NAD(+) = uridine(20a) in tRNA + NADH + H(+). In terms of biological role, catalyzes the synthesis of 5,6-dihydrouridine (D), a modified base found in the D-loop of most tRNAs, via the reduction of the C5-C6 double bond in target uridines. Specifically modifies U20 and U20a in tRNAs. The polypeptide is tRNA-dihydrouridine(20/20a) synthase (Xylella fastidiosa (strain Temecula1 / ATCC 700964)).